Reading from the N-terminus, the 503-residue chain is Cytochrome P450 monooxygenase roqO (503 aa).

The chain crosses the membrane as a helical span at residues 11 to 31; it reads YSGTACAISLFIFGITLLFPF. Asn205 carries an N-linked (GlcNAc...) asparagine glycan. Residue Cys444 participates in heme binding.

Belongs to the cytochrome P450 family. Heme is required as a cofactor.

It is found in the membrane. It functions in the pathway alkaloid biosynthesis. In terms of biological role, cytochrome P450 monooxygenase; part of the gene cluster that mediates the biosynthesis of the mycotoxin meleagrin. The first stage is catalyzed by the dipeptide synthase roqA which condenses histidine and tryptophan to produce histidyltryptophanyldiketopiperazine (HTD). HTD is then converted to roquefortine C through two possible pathways. In the first pathway, prenyltransferase roqD transforms HTD to the intermediate roquefortine D, which is in turn converted to roquefortine C by the cytochrome P450 monooxygenase roqR. In the second pathway, HTD is first converted to the intermediate dehydrohistidyltryptophanyldi-ketopiperazine (DHTD) by roqR which is then prenylated by roqD to form roquefortine C. Roquefortine C can be further transformed to meleagrin via three more reactions including oxydation to glandicolin A by roqM, which is further reduced to glandicoline B by roqO. Finally, glandicoline B is converted to meleagrin by the glandicoline B O-methyltransferase roqN. More studies identified further branching and additional metabolites produced by the roquefortine/meleagrin cluster, including roquefortine F, roquefortine L, roquefortine M, roquefortine N and neoxaline. This chain is Cytochrome P450 monooxygenase roqO, found in Penicillium rubens (strain ATCC 28089 / DSM 1075 / NRRL 1951 / Wisconsin 54-1255) (Penicillium chrysogenum).